Consider the following 596-residue polypeptide: Beta-glucuronidase (596 aa).

Positions 168 and 412 each coordinate D-glucuronate. Glu413 (proton donor) is an active-site residue. The D-glucuronate site is built by Asn464, Tyr470, Glu502, Trp547, and Lys566. The active-site Nucleophile is Glu502. An N-K motif motif is present at residues 564 to 566 (NKK).

Belongs to the glycosyl hydrolase 2 family.

The protein localises to the cytoplasm. The catalysed reaction is a beta-D-glucuronoside + H2O = D-glucuronate + an alcohol. Its function is as follows. Displays beta-glucuronidase activity with the artificial substrate p-nitrophenyl-beta-D-glucuronide (PNPG). Is probably involved in the metabolism of oligosaccharides containing the 3-O-beta-D-glucopyranosyl-beta-D-glucuronide structure released from bacterial and plant acidic carbohydrates. This is Beta-glucuronidase from Paenibacillus borealis.